The primary structure comprises 76 residues: Omega-conotoxin-like TxMKLT1-0141 (76 aa).

The N-terminal stretch at 1-22 (MKLTCMMIVAVLFLTAWTFATA) is a signal peptide. Residues 23-50 (DDSSNGLENLFPKAHHEMKNPEASKLNE) constitute a propeptide that is removed on maturation. Disulfide bonds link cysteine 52–cysteine 67, cysteine 59–cysteine 70, and cysteine 66–cysteine 75.

It belongs to the conotoxin O1 superfamily. As to expression, expressed by the venom duct.

The protein resides in the secreted. In terms of biological role, omega-conotoxins act at presynaptic membranes, they bind and block voltage-gated calcium channels (Cav). This chain is Omega-conotoxin-like TxMKLT1-0141, found in Conus textile (Cloth-of-gold cone).